The chain runs to 283 residues: 4-hydroxy-tetrahydrodipicolinate synthase (283 aa).

Thr46 is a binding site for pyruvate. Tyr134 (proton donor/acceptor) is an active-site residue. The Schiff-base intermediate with substrate role is filled by Lys162. Residue Ile208 participates in pyruvate binding.

This sequence belongs to the DapA family. In terms of assembly, homotetramer; dimer of dimers.

The protein resides in the cytoplasm. It catalyses the reaction L-aspartate 4-semialdehyde + pyruvate = (2S,4S)-4-hydroxy-2,3,4,5-tetrahydrodipicolinate + H2O + H(+). The protein operates within amino-acid biosynthesis; L-lysine biosynthesis via DAP pathway; (S)-tetrahydrodipicolinate from L-aspartate: step 3/4. Its function is as follows. Catalyzes the condensation of (S)-aspartate-beta-semialdehyde [(S)-ASA] and pyruvate to 4-hydroxy-tetrahydrodipicolinate (HTPA). The protein is 4-hydroxy-tetrahydrodipicolinate synthase of Methanothermobacter thermautotrophicus (strain ATCC 29096 / DSM 1053 / JCM 10044 / NBRC 100330 / Delta H) (Methanobacterium thermoautotrophicum).